We begin with the raw amino-acid sequence, 397 residues long: Tryptophan synthase beta chain (397 aa).

Lys87 is subject to N6-(pyridoxal phosphate)lysine.

This sequence belongs to the TrpB family. As to quaternary structure, tetramer of two alpha and two beta chains. It depends on pyridoxal 5'-phosphate as a cofactor.

It catalyses the reaction (1S,2R)-1-C-(indol-3-yl)glycerol 3-phosphate + L-serine = D-glyceraldehyde 3-phosphate + L-tryptophan + H2O. It functions in the pathway amino-acid biosynthesis; L-tryptophan biosynthesis; L-tryptophan from chorismate: step 5/5. Its function is as follows. The beta subunit is responsible for the synthesis of L-tryptophan from indole and L-serine. The sequence is that of Tryptophan synthase beta chain from Shigella boydii serotype 18 (strain CDC 3083-94 / BS512).